The sequence spans 301 residues: Probable 2-oxoglutarate-dependent dioxygenase AOP1 (301 aa).

The 105-residue stretch at 158 to 262 folds into the Fe2OG dioxygenase domain; sequence TYYLTRLMKY…RYSTGLFSIP (105 aa). Fe cation-binding residues include His-186, Asp-188, and His-243. Arg-253 contributes to the 2-oxoglutarate binding site.

This sequence belongs to the iron/ascorbate-dependent oxidoreductase family. Requires Fe(2+) as cofactor.

Its function is as follows. Probable 2-oxoglutarate-dependent dioxygenase that may be involved in glucosinolates biosynthesis. May play a role in the production of aliphatic glucosinolates. The sequence is that of Probable 2-oxoglutarate-dependent dioxygenase AOP1 (AOP1) from Arabidopsis thaliana (Mouse-ear cress).